Reading from the N-terminus, the 800-residue chain is Cation/H(+) antiporter 9 (800 aa).

12 consecutive transmembrane segments (helical) span residues 43–63, 73–93, 110–130, 145–165, 186–206, 216–236, 247–267, 287–306, 338–358, 371–391, 401–421, and 430–450; these read VIFG…FVCI, IGIP…PQLL, NVAL…LMGV, IVIA…FRNF, VIVS…VYEL, IAIS…VCIS, GIAN…LFIF, VYLY…LSVF, LVTN…ADVV, ILLL…PCLI, VIIA…FDVA, and ATYT…PTII.

It belongs to the monovalent cation:proton antiporter 2 (CPA2) transporter (TC 2.A.37) family. CHX (TC 2.A.37.4) subfamily.

The protein resides in the membrane. Its function is as follows. May operate as a cation/H(+) antiporter. The chain is Cation/H(+) antiporter 9 (CHX9) from Arabidopsis thaliana (Mouse-ear cress).